The primary structure comprises 146 residues: Stress-responsive DNAJB4-interacting membrane protein 1 (146 aa).

The first 26 residues, 1–26 (MWPAPCSVGRLLIFFMCSSSGYVVQG), serve as a signal peptide directing secretion. The Extracellular segment spans residues 27 to 66 (CGPSPGARTTLGSPLSLWSIKTPSHIFCTRRAINLGFPSP). Residues 67–87 (PLVQLIFWSLNAGLDLYLCLI) traverse the membrane as a helical segment. Residues 88–94 (SSCGFSQ) lie on the Cytoplasmic side of the membrane. The chain crosses the membrane as a helical span at residues 95 to 115 (VFWPVEAFCSFSLSFFALALS). Topologically, residues 116–146 (HKFVICRLDQHIFSGFTKSLKNLPPCHRTDI) are extracellular.

In terms of assembly, homodimer. Interacts with DNAJB4. As to expression, expressed in brain with higher detection in neurons than astrocytes. Decreased expression in Alzheimer brains. Detected at protein level in brain and cervix.

It localises to the membrane. Its function is as follows. Promotes neuronal cells survival to stress conditions. The sequence is that of Stress-responsive DNAJB4-interacting membrane protein 1 (SDIM1) from Homo sapiens (Human).